We begin with the raw amino-acid sequence, 475 residues long: C3a anaphylatoxin chemotactic receptor (475 aa).

The Extracellular portion of the chain corresponds to 1 to 23 (MESSSAETNSTGLHLEPQYQPET). N9 carries N-linked (GlcNAc...) asparagine glycosylation. Residues 24-46 (ILAMAILGLTFVLGLPGNGLVLW) form a helical membrane-spanning segment. Over 47 to 57 (VAGLKMRRTVN) the chain is Cytoplasmic. Residues 58–80 (TVWFLHLTVADFVCCLSLPFSMA) traverse the membrane as a helical segment. Topologically, residues 81 to 96 (HLALRGYWPYGEILCK) are extracellular. A disulfide bridge links C95 with C172. Residues 97–118 (FIPTVIIFNMFASVFLLTAISL) form a helical membrane-spanning segment. Residues 119–139 (DRCLMVLKPIWCQNHRNVRTA) lie on the Cytoplasmic side of the membrane. The chain crosses the membrane as a helical span at residues 140-160 (CIICGCIWLVAFVLCIPVFVY). At 161 to 331 (RETFTLENHT…RLLKVITFTR (171 aa)) the chain is on the extracellular side. N168 carries an N-linked (GlcNAc...) asparagine glycan. Y174 and Y183 each carry sulfotyrosine. N273 and N292 each carry an N-linked (GlcNAc...) asparagine glycan. A helical transmembrane segment spans residues 332-351 (LVVGFLLPMIIMVACYTLII). Residues 352 to 368 (FRMRRVRVVKSWNKALH) lie on the Cytoplasmic side of the membrane. A helical transmembrane segment spans residues 369 to 391 (LAMVVVTIFLICWAPYHVFGVLI). Over 392 to 408 (LFINPESRVGAALLSWD) the chain is Extracellular. The helical transmembrane segment at 409-429 (HVSIALASANSCFNPFLYALL) threads the bilayer. The Cytoplasmic portion of the chain corresponds to 430–475 (GRDLRKRVRQSMKGILEAAFSEDISKSTSFIQAKAFSEKHSLSTNV). Phosphoserine is present on S450.

It belongs to the G-protein coupled receptor 1 family. In terms of assembly, interacts with VGF-derived peptide TLQP-21. As to expression, expressed in the heart, kidney, lung, liver, peritoneal macrophages and spleen.

Its subcellular location is the cell membrane. Its function is as follows. Receptor for the chemotactic and inflammatory peptide anaphylatoxin C3a. This receptor stimulates chemotaxis, granule enzyme release and superoxide anion production. This Cavia porcellus (Guinea pig) protein is C3a anaphylatoxin chemotactic receptor (C3AR1).